Here is a 299-residue protein sequence, read N- to C-terminus: Protein phosphatase 1 regulatory subunit 3D (299 aa).

Residues 1 to 22 (MSRGPSSAVLPSALGSRKLGPR) form a disordered region. 3 positions are modified to phosphoserine: serine 23, serine 25, and serine 28. The tract at residues 37 to 94 (EPRACRPPGSPGRAPPPTPAPSGCDPRLRPIILRRARSLPSSPERRQKAAGAPGAACR) is disordered. Positions 44–56 (PGSPGRAPPPTPA) are enriched in pro residues. Positions 57–67 (PSGCDPRLRPI) are enriched in low complexity. Position 74 is a phosphoserine (serine 74). Over residues 85–94 (AAGAPGAACR) the composition is skewed to low complexity. The PP1-binding motif motif lies at 101–104 (LRVR). Serine 133 is modified (phosphoserine). A CBM21 domain is found at 169 to 278 (GERLQRQLVC…NNDHRDYSLT (110 aa)).

Interacts with PPP1CC catalytic subunit of PP1, and associates with glycogen. Interacts with EPM2A; in the presence of NHLC1/malin the interaction leads to PPP1R3D ubiquitination and autophagic degradation. Expressed in all tissues tested. High expression in skeletal muscle and heart.

Functionally, seems to act as a glycogen-targeting subunit for PP1. PP1 is essential for cell division, and participates in the regulation of glycogen metabolism, muscle contractility and protein synthesis. The sequence is that of Protein phosphatase 1 regulatory subunit 3D (PPP1R3D) from Homo sapiens (Human).